A 205-amino-acid polypeptide reads, in one-letter code: Protein phosphatase inhibitor 2 (205 aa).

2 disordered regions span residues 1–46 (MAAS…KSQK) and 64–205 (GLMK…SQSS). A2 carries the post-translational modification N-acetylalanine. Required for binding PPP1CC regions lie at residues 12–17 (KGILKN) and 43–55 (KSQK…ILAT). The span at 17–26 (NKTSSTSSRV) shows a compositional bias: polar residues. Residues 35–46 (SVDEELSKKSQK) show a composition bias toward basic and acidic residues. S44 is modified (phosphoserine; by ATM). T73 carries the phosphothreonine; by GSK3 modification. Over residues 80-91 (GDDDDAYSDTET) the composition is skewed to acidic residues. Position 87 is a phosphoserine (S87). Phosphothreonine occurs at positions 89, 92, and 96. Residues 110–120 (SEPKYRIREQE) are compositionally biased toward basic and acidic residues. S121, S122, S127, and S130 each carry phosphoserine. Residues 121–130 (SSGEEDSDLS) are compositionally biased toward acidic residues. Positions 131 to 143 (PEEREKKRQFEMK) are enriched in basic and acidic residues. Positions 147–150 (HYNE) are required for binding PPP1CC catalytic center, displacing metal ions and inhibition of PPP1CC catalytic activity. Acidic residues predominate over residues 167–179 (DDEEDEEMSETAD). The span at 182–205 (SMNTEESNQGSTPSDQRQNKSQSS) shows a compositional bias: polar residues.

It belongs to the protein phosphatase inhibitor 2 family. In terms of assembly, heterodimer with PP1. Phosphorylation on Ser-44 by ATM activates PP1 by dissociating the PP1-PPP1R2 complex. Phosphorylation on Thr-73 by GSK3 activates PP1 by dissociating the PP1-PPP1R2 complex.

Its function is as follows. Inhibitor of protein-phosphatase 1. This Oryctolagus cuniculus (Rabbit) protein is Protein phosphatase inhibitor 2 (PPP1R2).